The primary structure comprises 865 residues: Carbohydrate-responsive element-binding protein (865 aa).

Disordered stretches follow at residues 15–41 (PRVV…AGGL) and 53–77 (MVSS…LADF). Phosphoserine is present on residues Ser-20, Ser-23, and Ser-25. At Thr-27 the chain carries Phosphothreonine. Position 196 is a phosphoserine (Ser-196). Disordered stretches follow at residues 334-392 (GILG…TKMP) and 500-653 (QPRC…LSRG). Positions 351–368 (GMTPLSGNTRLQARNSCS) are enriched in polar residues. The span at 515-533 (ASPPTLTSATASPTATATA) shows a compositional bias: low complexity. Position 568 is a phosphoserine; by AMPK (Ser-568). Residues 583-597 (PPIPAPTPPRPPPGP) show a composition bias toward pro residues. A phosphoserine mark is found at Ser-615, Ser-627, and Ser-644. One can recognise a bHLH domain in the interval 662–716 (NRRITHISAEQKRRFNIKLGFDTLHGLVSTLSAQPSLKVSKATTLQKTAEYILML). The leucine-zipper stretch occupies residues 716–737 (LQQERAAMQEEAQQLRDEIEEL).

As to quaternary structure, binds DNA as a heterodimer with TCFL4/MLX. Post-translationally, phosphorylation at Ser-568 by AMPK inactivates the DNA-binding activity.

It localises to the nucleus. In terms of biological role, transcriptional repressor. Binds to the canonical and non-canonical E box sequences 5'-CACGTG-3'. The protein is Carbohydrate-responsive element-binding protein (Mlxipl) of Rattus norvegicus (Rat).